A 237-amino-acid polypeptide reads, in one-letter code: Phosphoribosylaminoimidazole-succinocarboxamide synthase (237 aa).

This sequence belongs to the SAICAR synthetase family.

The enzyme catalyses 5-amino-1-(5-phospho-D-ribosyl)imidazole-4-carboxylate + L-aspartate + ATP = (2S)-2-[5-amino-1-(5-phospho-beta-D-ribosyl)imidazole-4-carboxamido]succinate + ADP + phosphate + 2 H(+). It participates in purine metabolism; IMP biosynthesis via de novo pathway; 5-amino-1-(5-phospho-D-ribosyl)imidazole-4-carboxamide from 5-amino-1-(5-phospho-D-ribosyl)imidazole-4-carboxylate: step 1/2. The polypeptide is Phosphoribosylaminoimidazole-succinocarboxamide synthase (Erwinia tasmaniensis (strain DSM 17950 / CFBP 7177 / CIP 109463 / NCPPB 4357 / Et1/99)).